Reading from the N-terminus, the 101-residue chain is uncharacterized protein (101 aa).

This is an uncharacterized protein from Neurospora crassa (strain ATCC 24698 / 74-OR23-1A / CBS 708.71 / DSM 1257 / FGSC 987).